The sequence spans 117 residues: Holo-[acyl-carrier-protein] synthase (117 aa).

Mg(2+) contacts are provided by D8 and E59.

The protein belongs to the P-Pant transferase superfamily. AcpS family. It depends on Mg(2+) as a cofactor.

Its subcellular location is the cytoplasm. It catalyses the reaction apo-[ACP] + CoA = holo-[ACP] + adenosine 3',5'-bisphosphate + H(+). Functionally, transfers the 4'-phosphopantetheine moiety from coenzyme A to a Ser of acyl-carrier-protein. The protein is Holo-[acyl-carrier-protein] synthase of Staphylococcus carnosus (strain TM300).